The sequence spans 218 residues: Cytochrome c biogenesis ATP-binding export protein CcmA (218 aa).

Residues L2–V217 enclose the ABC transporter domain. An ATP-binding site is contributed by G34 to T41.

The protein belongs to the ABC transporter superfamily. CcmA exporter (TC 3.A.1.107) family. In terms of assembly, the complex is composed of two ATP-binding proteins (CcmA) and two transmembrane proteins (CcmB).

The protein resides in the cell inner membrane. It catalyses the reaction heme b(in) + ATP + H2O = heme b(out) + ADP + phosphate + H(+). In terms of biological role, part of the ABC transporter complex CcmAB involved in the biogenesis of c-type cytochromes; once thought to export heme, this seems not to be the case, but its exact role is uncertain. Responsible for energy coupling to the transport system. This chain is Cytochrome c biogenesis ATP-binding export protein CcmA, found in Yersinia pestis.